We begin with the raw amino-acid sequence, 408 residues long: LL-diaminopimelate aminotransferase (408 aa).

Substrate-binding residues include Tyr-15 and Gly-42. Pyridoxal 5'-phosphate contacts are provided by residues Tyr-72, 108–109, Tyr-132, Asn-187, Tyr-218, and 246–248; these read SK and SFS. Substrate-binding residues include Lys-109, Tyr-132, and Asn-187. Lys-249 is subject to N6-(pyridoxal phosphate)lysine. Residues Arg-257 and Asn-292 each coordinate pyridoxal 5'-phosphate. Substrate-binding residues include Asn-292 and Arg-388.

This sequence belongs to the class-I pyridoxal-phosphate-dependent aminotransferase family. LL-diaminopimelate aminotransferase subfamily. Homodimer. Requires pyridoxal 5'-phosphate as cofactor.

The enzyme catalyses (2S,6S)-2,6-diaminopimelate + 2-oxoglutarate = (S)-2,3,4,5-tetrahydrodipicolinate + L-glutamate + H2O + H(+). Its pathway is amino-acid biosynthesis; L-lysine biosynthesis via DAP pathway; LL-2,6-diaminopimelate from (S)-tetrahydrodipicolinate (aminotransferase route): step 1/1. Its function is as follows. Involved in the synthesis of meso-diaminopimelate (m-DAP or DL-DAP), required for both lysine and peptidoglycan biosynthesis. Catalyzes the direct conversion of tetrahydrodipicolinate to LL-diaminopimelate. The polypeptide is LL-diaminopimelate aminotransferase (Leptospira borgpetersenii serovar Hardjo-bovis (strain JB197)).